Here is a 119-residue protein sequence, read N- to C-terminus: ATP-dependent Clp protease adapter protein ClpS (119 aa).

The segment at 1–33 is disordered; it reads MATRIPKTPSTPPAQKPAGDDGDSVVLERRPQK.

The protein belongs to the ClpS family. Binds to the N-terminal domain of the chaperone ClpA.

Involved in the modulation of the specificity of the ClpAP-mediated ATP-dependent protein degradation. This Variovorax paradoxus (strain S110) protein is ATP-dependent Clp protease adapter protein ClpS.